Here is a 171-residue protein sequence, read N- to C-terminus: Auxin-responsive protein IAA33 (171 aa).

2 stretches are compositionally biased toward polar residues: residues 1–11 and 19–32; these read MNSFEPQSQDS and DNSTTQQPRDTTTP. Positions 1–51 are disordered; that stretch reads MNSFEPQSQDSLQRRFHQDNSTTQQPRDTTTPFIPKPASKNHNNSNSSSGA. Over residues 40-49 the composition is skewed to low complexity; the sequence is KNHNNSNSSS. One can recognise a PB1 domain in the interval 72–162; it reads VPPVTVVLEG…KRIRILPVKG (91 aa).

It belongs to the Aux/IAA family. As to quaternary structure, homodimers and heterodimers.

Its subcellular location is the nucleus. Aux/IAA proteins are short-lived transcriptional factors that function as repressors of early auxin response genes at low auxin concentrations. Repression is thought to result from the interaction with auxin response factors (ARFs), proteins that bind to the auxin-responsive promoter element (AuxRE). Formation of heterodimers with ARF proteins may alter their ability to modulate early auxin response genes expression. In Arabidopsis thaliana (Mouse-ear cress), this protein is Auxin-responsive protein IAA33 (IAA33).